Here is a 394-residue protein sequence, read N- to C-terminus: Probable malate--CoA ligase subunit beta (394 aa).

The ATP-grasp domain occupies Lys-9–Phe-244. Residues Lys-46, Glu-99, Val-102, and Glu-107 each coordinate ATP. Mg(2+) contacts are provided by Asn-199 and Asp-213.

Belongs to the succinate/malate CoA ligase beta subunit family. Heterotetramer of two alpha and two beta subunits. Mg(2+) is required as a cofactor.

The enzyme catalyses (S)-malate + ATP + CoA = (S)-malyl-CoA + ADP + phosphate. It functions in the pathway one-carbon metabolism; formaldehyde assimilation via serine pathway. In Mesorhizobium japonicum (strain LMG 29417 / CECT 9101 / MAFF 303099) (Mesorhizobium loti (strain MAFF 303099)), this protein is Probable malate--CoA ligase subunit beta (mtkA).